The chain runs to 450 residues: Tubulin beta-1 chain (450 aa).

The GTP site is built by glutamine 11, glutamate 69, serine 138, glycine 142, threonine 143, glycine 144, asparagine 204, and asparagine 226. Residue glutamate 69 coordinates Mg(2+). The interval 426-450 is disordered; sequence QDATADEDEYGEEEGDEEEYGQHDI. Over residues 429–444 the composition is skewed to acidic residues; sequence TADEDEYGEEEGDEEE.

The protein belongs to the tubulin family. Dimer of alpha and beta chains. A typical microtubule is a hollow water-filled tube with an outer diameter of 25 nm and an inner diameter of 15 nM. Alpha-beta heterodimers associate head-to-tail to form protofilaments running lengthwise along the microtubule wall with the beta-tubulin subunit facing the microtubule plus end conferring a structural polarity. Microtubules usually have 13 protofilaments but different protofilament numbers can be found in some organisms and specialized cells. The cofactor is Mg(2+).

The protein localises to the cytoplasm. The protein resides in the cytoskeleton. Tubulin is the major constituent of microtubules, a cylinder consisting of laterally associated linear protofilaments composed of alpha- and beta-tubulin heterodimers. Microtubules grow by the addition of GTP-tubulin dimers to the microtubule end, where a stabilizing cap forms. Below the cap, tubulin dimers are in GDP-bound state, owing to GTPase activity of alpha-tubulin. This Pisum sativum (Garden pea) protein is Tubulin beta-1 chain (TUBB1).